Consider the following 373-residue polypeptide: MKGGKMDKLKPIIAIISLQFGYAGMYIITMVSFKHGMNHWILATYRHVVATIVIAPFALILERKIRPKMTWPLFLRILALGFLEPLLDQNLYYIGMKATSATYSSAFVNALPAITFIMAVIFRIETVNLKKTRSLAKVIGTAITVGGAMVMTLYKGPAIELFKTAHSSLHGGSSGTSSETTDQNWVTGTLAVMGSITTWAGFFILQSFTLKKYPAELSLVMWICAMGTVLNTIASLIMVRDVSAWKVGMDSGTLAAVYSGVVCSGMAYYIQSIVIRERGPVFTTSFSPMCMIITAFLGVLVLAEKIHLGSIIGAIFIVFGLYSVVWGKAKDEVISVEEKIGMQELPITNTSTKVEGGGITSEVNEGVTNNTQV.

The next 10 membrane-spanning stretches (helical) occupy residues 11 to 31, 41 to 61, 67 to 87, 102 to 122, 139 to 159, 185 to 205, 219 to 239, 255 to 275, 281 to 301, and 306 to 326; these read PIIA…ITMV, ILAT…ALIL, PKMT…EPLL, TYSS…AVIF, IGTA…GPAI, WVTG…FFIL, LVMW…LIMV, AAVY…SIVI, VFTT…GVLV, and IHLG…SVVW. EamA domains follow at residues 23–151 and 198–325; these read AGMY…AMVM and TWAG…YSVV.

The protein belongs to the drug/metabolite transporter (DMT) superfamily. Plant drug/metabolite exporter (P-DME) (TC 2.A.7.4) family.

The protein localises to the membrane. In Arabidopsis thaliana (Mouse-ear cress), this protein is WAT1-related protein At4g08300.